The chain runs to 66 residues: KEGYPVDWGNCKYECMSDAYCKDLCVDRKAKSGYCYKLNWSCYCEGLPDDSPIKTNGHCRPGGRRK.

An LCN-type CS-alpha/beta domain is found at 1-60 (KEGYPVDWGNCKYECMSDAYCKDLCVDRKAKSGYCYKLNWSCYCEGLPDDSPIKTNGHCR). Intrachain disulfides connect Cys11–Cys59, Cys15–Cys35, Cys21–Cys42, and Cys25–Cys44.

Belongs to the long (4 C-C) scorpion toxin superfamily. Sodium channel inhibitor family. Alpha subfamily. As to expression, expressed by the venom gland.

It localises to the secreted. Alpha toxins bind voltage-independently at site-3 of sodium channels (Nav) and inhibits the inactivation of the activated channels, thereby blocking neuronal transmission. The protein is Putative alpha-neurotoxin RjAa13 of Rhopalurus junceus (Caribbean blue scorpion).